The primary structure comprises 590 residues: V-type ATP synthase alpha chain (590 aa).

232–239 lines the ATP pocket; that stretch reads GPFGSGKT.

Belongs to the ATPase alpha/beta chains family.

The catalysed reaction is ATP + H2O + 4 H(+)(in) = ADP + phosphate + 5 H(+)(out). Its function is as follows. Produces ATP from ADP in the presence of a proton gradient across the membrane. The V-type alpha chain is a catalytic subunit. This chain is V-type ATP synthase alpha chain, found in Thermoanaerobacter sp. (strain X514).